Reading from the N-terminus, the 274-residue chain is RNA polymerase sigma factor SigI4 (274 aa).

Positions 87 to 100 match the Polymerase core binding motif; it reads EEYSVGLMAFNEAI. A DNA-binding region (H-T-H motif) is located at residues 226–245; the sequence is LSELMGLVNVHRKTVERNRK.

This sequence belongs to the sigma-70 factor family. SigI subfamily. As to quaternary structure, interacts with RsgI4.

Its subcellular location is the cytoplasm. Its activity is regulated as follows. Negatively regulated by the anti-sigma-I factor RsgI4. Binding of the polysaccharide substrate to RsgI4 may lead to the release and activation of SigI4. In terms of biological role, sigma factors are initiation factors that promote the attachment of RNA polymerase to specific initiation sites and are then released. This sigma factor is involved in regulation of cellulosomal genes via an external polysaccharide-sensing mechanism. The polypeptide is RNA polymerase sigma factor SigI4 (Acetivibrio thermocellus (strain ATCC 27405 / DSM 1237 / JCM 9322 / NBRC 103400 / NCIMB 10682 / NRRL B-4536 / VPI 7372) (Clostridium thermocellum)).